A 223-amino-acid chain; its full sequence is Acetate CoA-transferase subunit beta (223 aa).

Glutamate 46 is a catalytic residue.

It belongs to the 3-oxoacid CoA-transferase subunit B family. In terms of assembly, heterotetramer composed of two alpha subunits (AtoD) and two beta subunits (AtoA).

It catalyses the reaction an acyl-CoA + acetate = a carboxylate + acetyl-CoA. The catalysed reaction is acetoacetate + acetyl-CoA = acetoacetyl-CoA + acetate. The protein operates within lipid metabolism; short-chain fatty acid metabolism. In terms of biological role, coenzyme A transferase which is involved in short-chain fatty acid degradation and catalyzes the activation of short-chain fatty acids to their respective CoA thiolesters. The protein is Acetate CoA-transferase subunit beta (atoA) of Haemophilus influenzae (strain ATCC 51907 / DSM 11121 / KW20 / Rd).